The chain runs to 659 residues: RNA-binding protein MIP6 (659 aa).

Residues 1–27 show a composition bias toward polar residues; that stretch reads MPNSHGNVLNNISLNSKQNPRSISKSC. Positions 1-35 are disordered; sequence MPNSHGNVLNNISLNSKQNPRSISKSCPNDKDARQ. 3 RRM domains span residues 111–189, 199–267, and 313–389; these read NSLF…PSMK, TNVF…GNKI, and KTIL…PGKD.

In terms of assembly, interacts with MEX67.

The protein resides in the cytoplasm. This chain is RNA-binding protein MIP6 (MIP6), found in Saccharomyces cerevisiae (strain ATCC 204508 / S288c) (Baker's yeast).